The sequence spans 140 residues: Ribosome maturation factor RimP (140 aa).

This sequence belongs to the RimP family.

It is found in the cytoplasm. Its function is as follows. Required for maturation of 30S ribosomal subunits. This is Ribosome maturation factor RimP from Campylobacter jejuni subsp. jejuni serotype O:2 (strain ATCC 700819 / NCTC 11168).